The sequence spans 127 residues: Large ribosomal subunit protein uL18 (127 aa).

It belongs to the universal ribosomal protein uL18 family. As to quaternary structure, part of the 50S ribosomal subunit; part of the 5S rRNA/L5/L18/L25 subcomplex. Contacts the 5S and 23S rRNAs.

Its function is as follows. This is one of the proteins that bind and probably mediate the attachment of the 5S RNA into the large ribosomal subunit, where it forms part of the central protuberance. This Streptomyces avermitilis (strain ATCC 31267 / DSM 46492 / JCM 5070 / NBRC 14893 / NCIMB 12804 / NRRL 8165 / MA-4680) protein is Large ribosomal subunit protein uL18.